The sequence spans 548 residues: Pentatricopeptide repeat-containing protein At5g15300 (548 aa).

PPR repeat units follow at residues 76–110, 111–145, 146–176, 177–211, 212–238, 239–273, 274–308, 314–348, 349–378, 379–409, and 415–445; these read DVSI…GVSP, DRYT…GFVL, NEYV…SAKA, HKVA…DQVA, WNVM…FTEK, DVVT…GEHP, DVVT…ASVS, GTPI…DLST, WNTL…KVWP, NEVT…MRDM, and NIKH…MKIE. Positions 450–525 are type E motif; that stretch reads VWRTLLGACK…PTGVSLIEED (76 aa).

Belongs to the PPR family. PCMP-E subfamily.

This Arabidopsis thaliana (Mouse-ear cress) protein is Pentatricopeptide repeat-containing protein At5g15300 (PCMP-E40).